A 422-amino-acid polypeptide reads, in one-letter code: Serine hydroxymethyltransferase (422 aa).

Residues Leu-118 and 122–124 (GHL) each bind (6S)-5,6,7,8-tetrahydrofolate. The residue at position 227 (Lys-227) is an N6-(pyridoxal phosphate)lysine. (6S)-5,6,7,8-tetrahydrofolate is bound by residues Glu-243 and 351-353 (SPF).

It belongs to the SHMT family. As to quaternary structure, homodimer. Pyridoxal 5'-phosphate serves as cofactor.

It localises to the cytoplasm. It catalyses the reaction (6R)-5,10-methylene-5,6,7,8-tetrahydrofolate + glycine + H2O = (6S)-5,6,7,8-tetrahydrofolate + L-serine. Its pathway is one-carbon metabolism; tetrahydrofolate interconversion. It functions in the pathway amino-acid biosynthesis; glycine biosynthesis; glycine from L-serine: step 1/1. In terms of biological role, catalyzes the reversible interconversion of serine and glycine with tetrahydrofolate (THF) serving as the one-carbon carrier. This reaction serves as the major source of one-carbon groups required for the biosynthesis of purines, thymidylate, methionine, and other important biomolecules. Also exhibits THF-independent aldolase activity toward beta-hydroxyamino acids, producing glycine and aldehydes, via a retro-aldol mechanism. This chain is Serine hydroxymethyltransferase, found in Kosmotoga olearia (strain ATCC BAA-1733 / DSM 21960 / TBF 19.5.1).